The chain runs to 211 residues: LexA repressor (211 aa).

A DNA-binding region (H-T-H motif) is located at residues 31–51 (RAEISKELGFRSPNAAEEHLK). Catalysis depends on for autocatalytic cleavage activity residues serine 127 and lysine 164.

This sequence belongs to the peptidase S24 family. In terms of assembly, homodimer.

The enzyme catalyses Hydrolysis of Ala-|-Gly bond in repressor LexA.. Represses a number of genes involved in the response to DNA damage (SOS response), including recA and lexA. In the presence of single-stranded DNA, RecA interacts with LexA causing an autocatalytic cleavage which disrupts the DNA-binding part of LexA, leading to derepression of the SOS regulon and eventually DNA repair. The polypeptide is LexA repressor (Pasteurella multocida (strain Pm70)).